A 456-amino-acid chain; its full sequence is Methylenetetrahydrofolate--tRNA-(uracil-5-)-methyltransferase TrmFO (456 aa).

9 to 14 (GGGMAG) is a binding site for FAD.

Belongs to the MnmG family. TrmFO subfamily. It depends on FAD as a cofactor.

The protein localises to the cytoplasm. The enzyme catalyses uridine(54) in tRNA + (6R)-5,10-methylene-5,6,7,8-tetrahydrofolate + NADH + H(+) = 5-methyluridine(54) in tRNA + (6S)-5,6,7,8-tetrahydrofolate + NAD(+). It catalyses the reaction uridine(54) in tRNA + (6R)-5,10-methylene-5,6,7,8-tetrahydrofolate + NADPH + H(+) = 5-methyluridine(54) in tRNA + (6S)-5,6,7,8-tetrahydrofolate + NADP(+). Its function is as follows. Catalyzes the folate-dependent formation of 5-methyl-uridine at position 54 (M-5-U54) in all tRNAs. The protein is Methylenetetrahydrofolate--tRNA-(uracil-5-)-methyltransferase TrmFO of Novosphingobium aromaticivorans (strain ATCC 700278 / DSM 12444 / CCUG 56034 / CIP 105152 / NBRC 16084 / F199).